Consider the following 483-residue polypeptide: Proline--tRNA ligase (483 aa).

Belongs to the class-II aminoacyl-tRNA synthetase family. ProS type 3 subfamily. As to quaternary structure, homodimer.

It is found in the cytoplasm. It carries out the reaction tRNA(Pro) + L-proline + ATP = L-prolyl-tRNA(Pro) + AMP + diphosphate. Functionally, catalyzes the attachment of proline to tRNA(Pro) in a two-step reaction: proline is first activated by ATP to form Pro-AMP and then transferred to the acceptor end of tRNA(Pro). This is Proline--tRNA ligase from Sulfolobus acidocaldarius (strain ATCC 33909 / DSM 639 / JCM 8929 / NBRC 15157 / NCIMB 11770).